An 875-amino-acid chain; its full sequence is Protein HIR2 (875 aa).

6 WD repeats span residues 10–47 (IHNEQVNALAALGPYIILAGSGGHVMAWRQQQLVDTAF), 118–158 (KSPS…KLSE), 163–201 (KASKPITGIIDPTGQTFTVMTSDRSILVYQINKTGTHKL), 237–277 (PNNA…PAFY), 278–316 (EKPNLKKGTSTRYNLIATSGSTDGTILVWNTKRMKPLFN), and 320–359 (VSSTAINDMSWSQDGFTLFAISNDATLYTFAFQEKDLGVA). A disordered region spans residues 398-473 (ESASAAPIPN…IAPGSKKQKK (76 aa)). A compositionally biased stretch (polar residues) spans 424-446 (ANNQTNGIKTIQSTSMEFNTPSY). WD repeat units follow at residues 546–587 (LFQD…LMAP) and 589–626 (VLGVSISFLEACGTYLLCLTSIGELYCWNIEQKKLAFP). A Phosphoserine modification is found at S713.

This sequence belongs to the WD repeat HIR1 family. As to quaternary structure, component of the HIR complex, composed of HIR1, HIR2, HIR3 and HPC2. This complex may consist of one copy of HIR1 and HIR3 and two copies of HIR2 and HPC2. The HIR complex interacts with ASF1. Interacts with SNF2. Interacts with SNF5. Interacts with SWI3. Interacts with RTT106.

The protein resides in the nucleus. It is found in the chromosome. In terms of biological role, component of the HIR complex, which cooperates with ASF1 to promote replication-independent chromatin assembly. The HIR complex is also required for the periodic repression of three of the four histone gene loci during the cell cycle as well as for autogenous regulation of the HTA1-HTB1 locus by H2A and H2B. DNA-binding by the HIR complex may repress transcription by inhibiting nucleosome remodeling by the SWI/SNF complex. The HIR complex may also be required for transcriptional silencing of centromeric, telomeric and mating-type loci in the absence of CAF-1. This chain is Protein HIR2 (HIR2), found in Saccharomyces cerevisiae (strain ATCC 204508 / S288c) (Baker's yeast).